A 712-amino-acid polypeptide reads, in one-letter code: Ribosome-releasing factor 2, mitochondrial (712 aa).

A mitochondrion-targeting transit peptide spans Met-1–Tyr-29. One can recognise a tr-type G domain in the interval Ser-31–Glu-310. Residues Ala-40–Thr-47, Asp-104–His-108, and Asn-158–Asp-161 contribute to the GTP site.

It belongs to the TRAFAC class translation factor GTPase superfamily. Classic translation factor GTPase family. EF-G/EF-2 subfamily.

The protein localises to the mitochondrion. Mitochondrial GTPase that mediates the disassembly of ribosomes from messenger RNA at the termination of mitochondrial protein biosynthesis. Not involved in the GTP-dependent ribosomal translocation step during translation elongation. This Drosophila yakuba (Fruit fly) protein is Ribosome-releasing factor 2, mitochondrial.